The chain runs to 467 residues: Glutamate--tRNA ligase (467 aa).

A 'HIGH' region motif is present at residues P13–G23. The 'KMSKS' region signature appears at K245–R249. K248 lines the ATP pocket.

It belongs to the class-I aminoacyl-tRNA synthetase family. Glutamate--tRNA ligase type 1 subfamily. As to quaternary structure, monomer.

The protein resides in the cytoplasm. The catalysed reaction is tRNA(Glu) + L-glutamate + ATP = L-glutamyl-tRNA(Glu) + AMP + diphosphate. Its function is as follows. Catalyzes the attachment of glutamate to tRNA(Glu) in a two-step reaction: glutamate is first activated by ATP to form Glu-AMP and then transferred to the acceptor end of tRNA(Glu). In Herminiimonas arsenicoxydans, this protein is Glutamate--tRNA ligase.